Here is a 288-residue protein sequence, read N- to C-terminus: GDSL esterase/lipase At3g43550 (288 aa).

Positions 1–19 are cleaved as a signal peptide; the sequence is MKLQIIWLALVLIAVETYA. Asparagine 25 is a glycosylation site (N-linked (GlcNAc...) asparagine). Serine 37 acts as the Nucleophile in catalysis.

This sequence belongs to the 'GDSL' lipolytic enzyme family.

It is found in the secreted. The polypeptide is GDSL esterase/lipase At3g43550 (Arabidopsis thaliana (Mouse-ear cress)).